The primary structure comprises 547 residues: Chaperonin GroEL 1 (547 aa).

Residues 30–33 (TLGP), Lys-51, 87–91 (DGTTT), Gly-415, and Asp-495 each bind ATP.

It belongs to the chaperonin (HSP60) family. In terms of assembly, forms a cylinder of 14 subunits composed of two heptameric rings stacked back-to-back. Interacts with the co-chaperonin GroES.

The protein resides in the cytoplasm. It carries out the reaction ATP + H2O + a folded polypeptide = ADP + phosphate + an unfolded polypeptide.. Functionally, together with its co-chaperonin GroES, plays an essential role in assisting protein folding. The GroEL-GroES system forms a nano-cage that allows encapsulation of the non-native substrate proteins and provides a physical environment optimized to promote and accelerate protein folding. The chain is Chaperonin GroEL 1 from Azorhizobium caulinodans (strain ATCC 43989 / DSM 5975 / JCM 20966 / LMG 6465 / NBRC 14845 / NCIMB 13405 / ORS 571).